A 287-amino-acid polypeptide reads, in one-letter code: Oxaloacetate decarboxylase (287 aa).

Substrate is bound at residue Ser-50. Asp-88 lines the Mg(2+) pocket. Substrate is bound by residues Arg-159 and His-235.

It belongs to the isocitrate lyase/PEP mutase superfamily. Oxaloacetate decarboxylase family. In terms of assembly, homotetramer; dimer of dimers. It depends on Mg(2+) as a cofactor.

The catalysed reaction is oxaloacetate + H(+) = pyruvate + CO2. Functionally, catalyzes the decarboxylation of oxaloacetate into pyruvate. Seems to play a role in maintaining cellular concentrations of bicarbonate and pyruvate. The protein is Oxaloacetate decarboxylase of Pseudomonas paraeruginosa (strain DSM 24068 / PA7) (Pseudomonas aeruginosa (strain PA7)).